We begin with the raw amino-acid sequence, 125 residues long: Phosphoribosyl-AMP cyclohydrolase (125 aa).

Aspartate 74 contributes to the Mg(2+) binding site. Position 75 (cysteine 75) interacts with Zn(2+). Aspartate 76 and aspartate 78 together coordinate Mg(2+). Zn(2+) contacts are provided by cysteine 92 and cysteine 99.

This sequence belongs to the PRA-CH family. As to quaternary structure, homodimer. Requires Mg(2+) as cofactor. It depends on Zn(2+) as a cofactor.

Its subcellular location is the cytoplasm. The enzyme catalyses 1-(5-phospho-beta-D-ribosyl)-5'-AMP + H2O = 1-(5-phospho-beta-D-ribosyl)-5-[(5-phospho-beta-D-ribosylamino)methylideneamino]imidazole-4-carboxamide. It participates in amino-acid biosynthesis; L-histidine biosynthesis; L-histidine from 5-phospho-alpha-D-ribose 1-diphosphate: step 3/9. In terms of biological role, catalyzes the hydrolysis of the adenine ring of phosphoribosyl-AMP. This chain is Phosphoribosyl-AMP cyclohydrolase, found in Geobacter sp. (strain M21).